The primary structure comprises 119 residues: Ribosome-binding factor A (119 aa).

Belongs to the RbfA family. Monomer. Binds 30S ribosomal subunits, but not 50S ribosomal subunits or 70S ribosomes.

It localises to the cytoplasm. One of several proteins that assist in the late maturation steps of the functional core of the 30S ribosomal subunit. Associates with free 30S ribosomal subunits (but not with 30S subunits that are part of 70S ribosomes or polysomes). Required for efficient processing of 16S rRNA. May interact with the 5'-terminal helix region of 16S rRNA. The polypeptide is Ribosome-binding factor A (Mycoplasmoides gallisepticum (strain R(low / passage 15 / clone 2)) (Mycoplasma gallisepticum)).